The primary structure comprises 148 residues: Protein H2A.6 (148 aa).

Residues 120 to 148 (GAAEKESTKSPKKKAATKSPKKKTAATKE) are disordered. 2 consecutive short sequence motifs (SPKK motif) follow at residues 129-132 (SPKK) and 138-141 (SPKK). Residues 129–148 (SPKKKAATKSPKKKTAATKE) show a composition bias toward basic residues.

The protein belongs to the histone H2A family. The nucleosome is a histone octamer containing two molecules each of H2A, H2B, H3 and H4 assembled in one H3-H4 heterotetramer and two H2A-H2B heterodimers. The octamer wraps approximately 147 bp of DNA. In terms of tissue distribution, abundant in meristematic tissues.

The protein localises to the nucleus. The protein resides in the chromosome. Its function is as follows. Core component of nucleosome. Nucleosomes wrap and compact DNA into chromatin, limiting DNA accessibility to the cellular machineries which require DNA as a template. Histones thereby play a central role in transcription regulation, DNA repair, DNA replication and chromosomal stability. DNA accessibility is regulated via a complex set of post-translational modifications of histones, also called histone code, and nucleosome remodeling. The protein is Protein H2A.6 (H2A-3) of Triticum aestivum (Wheat).